The following is a 537-amino-acid chain: 2-succinyl-5-enolpyruvyl-6-hydroxy-3-cyclohexene-1-carboxylate synthase (537 aa).

This sequence belongs to the TPP enzyme family. MenD subfamily. In terms of assembly, homodimer. The cofactor is Mg(2+). Mn(2+) serves as cofactor. Requires thiamine diphosphate as cofactor.

The enzyme catalyses isochorismate + 2-oxoglutarate + H(+) = 5-enolpyruvoyl-6-hydroxy-2-succinyl-cyclohex-3-ene-1-carboxylate + CO2. It functions in the pathway quinol/quinone metabolism; 1,4-dihydroxy-2-naphthoate biosynthesis; 1,4-dihydroxy-2-naphthoate from chorismate: step 2/7. Its pathway is quinol/quinone metabolism; menaquinone biosynthesis. Functionally, catalyzes the thiamine diphosphate-dependent decarboxylation of 2-oxoglutarate and the subsequent addition of the resulting succinic semialdehyde-thiamine pyrophosphate anion to isochorismate to yield 2-succinyl-5-enolpyruvyl-6-hydroxy-3-cyclohexene-1-carboxylate (SEPHCHC). The sequence is that of 2-succinyl-5-enolpyruvyl-6-hydroxy-3-cyclohexene-1-carboxylate synthase from Dechloromonas aromatica (strain RCB).